Consider the following 300-residue polypeptide: Diphthine methyl ester synthase (300 aa).

S-adenosyl-L-methionine-binding positions include leucine 9, aspartate 85, glycine 88, 113–114 (SV), leucine 164, leucine 222, and histidine 247.

This sequence belongs to the diphthine synthase family.

The protein localises to the cytoplasm. It catalyses the reaction 2-[(3S)-amino-3-carboxypropyl]-L-histidyl-[translation elongation factor 2] + 4 S-adenosyl-L-methionine = diphthine methyl ester-[translation elongation factor 2] + 4 S-adenosyl-L-homocysteine + 3 H(+). Its pathway is protein modification; peptidyl-diphthamide biosynthesis. In terms of biological role, S-adenosyl-L-methionine-dependent methyltransferase that catalyzes four methylations of the modified target histidine residue in translation elongation factor 2 (EF-2), to form an intermediate called diphthine methyl ester. The four successive methylation reactions represent the second step of diphthamide biosynthesis. The protein is Diphthine methyl ester synthase (DPH5) of Yarrowia lipolytica (strain CLIB 122 / E 150) (Yeast).